Consider the following 322-residue polypeptide: UDP-N-acetylenolpyruvoylglucosamine reductase (322 aa).

An FAD-binding PCMH-type domain is found at 36 to 202; the sequence is RAGGPAQVLF…TSVLFEGVPG (167 aa). Residue arginine 182 is part of the active site. Serine 231 (proton donor) is an active-site residue. The active site involves glutamate 301.

It belongs to the MurB family. Requires FAD as cofactor.

Its subcellular location is the cytoplasm. It catalyses the reaction UDP-N-acetyl-alpha-D-muramate + NADP(+) = UDP-N-acetyl-3-O-(1-carboxyvinyl)-alpha-D-glucosamine + NADPH + H(+). It participates in cell wall biogenesis; peptidoglycan biosynthesis. Its function is as follows. Cell wall formation. The polypeptide is UDP-N-acetylenolpyruvoylglucosamine reductase (Brucella melitensis biotype 2 (strain ATCC 23457)).